Consider the following 239-residue polypeptide: 1-(5-phosphoribosyl)-5-[(5-phosphoribosylamino)methylideneamino] imidazole-4-carboxamide isomerase (239 aa).

The Proton acceptor role is filled by D12. Catalysis depends on D132, which acts as the Proton donor.

The protein belongs to the HisA/HisF family.

Its subcellular location is the cytoplasm. The catalysed reaction is 1-(5-phospho-beta-D-ribosyl)-5-[(5-phospho-beta-D-ribosylamino)methylideneamino]imidazole-4-carboxamide = 5-[(5-phospho-1-deoxy-D-ribulos-1-ylimino)methylamino]-1-(5-phospho-beta-D-ribosyl)imidazole-4-carboxamide. It functions in the pathway amino-acid biosynthesis; L-histidine biosynthesis; L-histidine from 5-phospho-alpha-D-ribose 1-diphosphate: step 4/9. The protein is 1-(5-phosphoribosyl)-5-[(5-phosphoribosylamino)methylideneamino] imidazole-4-carboxamide isomerase of Natronomonas pharaonis (strain ATCC 35678 / DSM 2160 / CIP 103997 / JCM 8858 / NBRC 14720 / NCIMB 2260 / Gabara) (Halobacterium pharaonis).